We begin with the raw amino-acid sequence, 194 residues long: Peptidyl-tRNA hydrolase (194 aa).

Residue Tyr17 coordinates tRNA. The active-site Proton acceptor is His22. The tRNA site is built by Phe68, Asn70, and Asn116.

The protein belongs to the PTH family. Monomer.

It localises to the cytoplasm. It catalyses the reaction an N-acyl-L-alpha-aminoacyl-tRNA + H2O = an N-acyl-L-amino acid + a tRNA + H(+). Its function is as follows. Hydrolyzes ribosome-free peptidyl-tRNAs (with 1 or more amino acids incorporated), which drop off the ribosome during protein synthesis, or as a result of ribosome stalling. Functionally, catalyzes the release of premature peptidyl moieties from peptidyl-tRNA molecules trapped in stalled 50S ribosomal subunits, and thus maintains levels of free tRNAs and 50S ribosomes. The protein is Peptidyl-tRNA hydrolase of Histophilus somni (strain 129Pt) (Haemophilus somnus).